Consider the following 66-residue polypeptide: Toxin Boma6a (66 aa).

Residues 2 to 64 form the LCN-type CS-alpha/beta domain; sequence RDAYIAQNYN…VPIKVEGKCH (63 aa). Disulfide bonds link Cys-12–Cys-63, Cys-16–Cys-36, Cys-22–Cys-46, and Cys-26–Cys-48.

The protein belongs to the long (4 C-C) scorpion toxin superfamily. Sodium channel inhibitor family. Alpha subfamily. In terms of tissue distribution, expressed by the venom gland.

The protein resides in the secreted. Its function is as follows. Alpha toxins bind voltage-independently at site-3 of sodium channels (Nav) and inhibit the inactivation of the activated channels, thereby blocking neuronal transmission. This Buthus occitanus mardochei (Moroccan scorpion) protein is Toxin Boma6a.